We begin with the raw amino-acid sequence, 500 residues long: MATAASNPYLPGNSLLAAGSIVHSDAAGAGGGGGGGGGGGGGGAGGGGGGMQPGSAAVTSGAYRGDPSSVKMVQSDFMQGAMAASNGGHMLSHAHQWVTALPHAAAAAAAAAAAAVEASSPWSGSAVGMAGSPQQPPQPPPPPPQGPDVKGGAGRDDLHAGTALHHRGPPHLGPPPPPPHQGHPGGWGAAAAAAAAAAAAAAAAHLPSMAGGQQPPPQSLLYSQPGGFTVNGMLSAPPGPGGGGGGAGGGAQSLVHPGLVRGDTPELAEHHHHHHHHAHPHPPHPHHAQGPPHHGGGGGGAGPGLNSHDPHSDEDTPTSDDLEQFAKQFKQRRIKLGFTQADVGLALGTLYGNVFSQTTICRFEALQLSFKNMCKLKPLLNKWLEEADSSTGSPTSIDKIAAQGRKRKKRTSIEVSVKGALESHFLKCPKPSAQEITNLADSLQLEKEVVRVWFCNRRQKEKRMTPPGIQQQTPDDVYSQVGTVSADTPPPHHGLQTSVQ.

Over residues 32-52 the composition is skewed to gly residues; that stretch reads GGGGGGGGGGGGAGGGGGGMQ. 4 disordered regions span residues 32–63, 122–190, 231–319, and 461–500; these read GGGG…SGAY, WSGS…WGAA, NGML…TPTS, and EKRM…TSVQ. Composition is skewed to pro residues over residues 134 to 146 and 171 to 181; these read QQPP…PPQG and HLGPPPPPPHQ. Positions 241-251 are enriched in gly residues; it reads GGGGGGAGGGA. A compositionally biased stretch (basic residues) spans 270-287; that stretch reads HHHHHHHHAHPHPPHPHH. Positions 293 to 303 are enriched in gly residues; it reads HHGGGGGGAGP. In terms of domain architecture, POU-specific spans 314–388; sequence EDTPTSDDLE…LLNKWLEEAD (75 aa). The segment at residues 406-465 is a DNA-binding region (homeobox); it reads KRKKRTSIEVSVKGALESHFLKCPKPSAQEITNLADSLQLEKEVVRVWFCNRRQKEKRMT. A compositionally biased stretch (polar residues) spans 468-486; that stretch reads GIQQQTPDDVYSQVGTVSA.

The protein belongs to the POU transcription factor family. Class-3 subfamily. As to quaternary structure, homodimer. As to expression, brain.

The protein localises to the nucleus. Functionally, transcription factor that acts synergistically with SOX11 and SOX4. Plays a role in neuronal development. Is implicated in an enhancer activity at the embryonic met-mesencephalic junction; the enhancer element contains the octamer motif (5'-ATTTGCAT-3'). This chain is POU domain, class 3, transcription factor 3, found in Homo sapiens (Human).